Here is a 444-residue protein sequence, read N- to C-terminus: Tubulin beta-8 chain (444 aa).

Residues 1–4 carry the MREI motif motif; it reads MREI. Q11, E69, S138, G142, T143, and G144 together coordinate GTP. E69 serves as a coordination point for Mg(2+). S172 bears the Phosphoserine; by CDK1 mark. GTP contacts are provided by N204 and N226. E436 is modified (5-glutamyl polyglutamate).

It belongs to the tubulin family. Dimer of alpha and beta chains. A typical microtubule is a hollow water-filled tube with an outer diameter of 25 nm and an inner diameter of 15 nM. Alpha-beta heterodimers associate head-to-tail to form protofilaments running lengthwise along the microtubule wall with the beta-tubulin subunit facing the microtubule plus end conferring a structural polarity. Microtubules usually have 13 protofilaments but different protofilament numbers can be found in some organisms and specialized cells. The cofactor is Mg(2+). In terms of processing, some glutamate residues at the C-terminus are polyglycylated, resulting in polyglycine chains on the gamma-carboxyl group. Glycylation is mainly limited to tubulin incorporated into axonemes (cilia and flagella) whereas glutamylation is prevalent in neuronal cells, centrioles, axonemes, and the mitotic spindle. Both modifications can coexist on the same protein on adjacent residues, and lowering polyglycylation levels increases polyglutamylation, and reciprocally. Cilia and flagella glycylation is required for their stability and maintenance. Flagella glycylation controls sperm motility. Some glutamate residues at the C-terminus are polyglutamylated, resulting in polyglutamate chains on the gamma-carboxyl group. Polyglutamylation plays a key role in microtubule severing by spastin (SPAST). SPAST preferentially recognizes and acts on microtubules decorated with short polyglutamate tails: severing activity by SPAST increases as the number of glutamates per tubulin rises from one to eight, but decreases beyond this glutamylation threshold. Glutamylation is also involved in cilia motility. Post-translationally, phosphorylated on Ser-172 by CDK1 during the cell cycle, from metaphase to telophase, but not in interphase. This phosphorylation inhibits tubulin incorporation into microtubules.

It localises to the cytoplasm. The protein localises to the cytoskeleton. The protein resides in the spindle. In terms of biological role, tubulin is the major constituent of microtubules, a cylinder consisting of laterally associated linear protofilaments composed of alpha- and beta-tubulin heterodimers. Microtubules grow by the addition of GTP-tubulin dimers to the microtubule end, where a stabilizing cap forms. Below the cap, tubulin dimers are in GDP-bound state, owing to GTPase activity of alpha-tubulin. Has a key role in meiotic spindle assembly and oocyte maturation. This is Tubulin beta-8 chain (TUBB8) from Papio hamadryas (Hamadryas baboon).